The following is a 54-amino-acid chain: MPQLNPIPWVFLFFLVWLVLGFLGLQKFTSVVTTTLDDSSEEVEVKSKEYSWPW.

The chain crosses the membrane as a helical span at residues 9 to 25 (WVFLFFLVWLVLGFLGL).

Belongs to the ATPase protein 8 family. As to quaternary structure, component of the ATP synthase complex composed at least of ATP5F1A/subunit alpha, ATP5F1B/subunit beta, ATP5MC1/subunit c (homooctomer), MT-ATP6/subunit a, MT-ATP8/subunit 8, ATP5ME/subunit e, ATP5MF/subunit f, ATP5MG/subunit g, ATP5MK/subunit k, ATP5MJ/subunit j, ATP5F1C/subunit gamma, ATP5F1D/subunit delta, ATP5F1E/subunit epsilon, ATP5PF/subunit F6, ATP5PB/subunit b, ATP5PD/subunit d, ATP5PO/subunit OSCP. ATP synthase complex consists of a soluble F(1) head domain (subunits alpha(3) and beta(3)) - the catalytic core - and a membrane F(0) domain - the membrane proton channel (subunits c, a, 8, e, f, g, k and j). These two domains are linked by a central stalk (subunits gamma, delta, and epsilon) rotating inside the F1 region and a stationary peripheral stalk (subunits F6, b, d, and OSCP).

The protein resides in the mitochondrion membrane. In terms of biological role, subunit 8, of the mitochondrial membrane ATP synthase complex (F(1)F(0) ATP synthase or Complex V) that produces ATP from ADP in the presence of a proton gradient across the membrane which is generated by electron transport complexes of the respiratory chain. ATP synthase complex consist of a soluble F(1) head domain - the catalytic core - and a membrane F(1) domain - the membrane proton channel. These two domains are linked by a central stalk rotating inside the F(1) region and a stationary peripheral stalk. During catalysis, ATP synthesis in the catalytic domain of F(1) is coupled via a rotary mechanism of the central stalk subunits to proton translocation. In vivo, can only synthesize ATP although its ATP hydrolase activity can be activated artificially in vitro. Part of the complex F(0) domain. This is ATP synthase F(0) complex subunit 8 from Branchiostoma lanceolatum (Common lancelet).